Reading from the N-terminus, the 423-residue chain is Glucose-1-phosphate adenylyltransferase (423 aa).

Alpha-D-glucose 1-phosphate-binding positions include tyrosine 98, glycine 163, 178–179 (EK), and serine 189.

The protein belongs to the bacterial/plant glucose-1-phosphate adenylyltransferase family. Homotetramer.

The enzyme catalyses alpha-D-glucose 1-phosphate + ATP + H(+) = ADP-alpha-D-glucose + diphosphate. The protein operates within glycan biosynthesis; glycogen biosynthesis. Its function is as follows. Involved in the biosynthesis of ADP-glucose, a building block required for the elongation reactions to produce glycogen. Catalyzes the reaction between ATP and alpha-D-glucose 1-phosphate (G1P) to produce pyrophosphate and ADP-Glc. This Thermotoga neapolitana (strain ATCC 49049 / DSM 4359 / NBRC 107923 / NS-E) protein is Glucose-1-phosphate adenylyltransferase.